The primary structure comprises 378 residues: Putative glutamate--cysteine ligase 2 (378 aa).

The protein belongs to the glutamate--cysteine ligase type 2 family. YbdK subfamily.

It catalyses the reaction L-cysteine + L-glutamate + ATP = gamma-L-glutamyl-L-cysteine + ADP + phosphate + H(+). In terms of biological role, ATP-dependent carboxylate-amine ligase which exhibits weak glutamate--cysteine ligase activity. The protein is Putative glutamate--cysteine ligase 2 of Salinispora arenicola (strain CNS-205).